Consider the following 857-residue polypeptide: Catalase-peroxidase (857 aa).

A cross-link (tryptophyl-tyrosyl-methioninium (Trp-Tyr) (with M-356)) is located at residues Trp-207–Tyr-330. His-208 acts as the Proton acceptor in catalysis. The tryptophyl-tyrosyl-methioninium (Tyr-Met) (with W-207) cross-link spans Tyr-330–Met-356. Heme b is bound at residue His-371.

Belongs to the peroxidase family. Peroxidase/catalase subfamily. As to quaternary structure, homodimer or homotetramer. Requires heme b as cofactor. Formation of the three residue Trp-Tyr-Met cross-link is important for the catalase, but not the peroxidase activity of the enzyme.

It carries out the reaction H2O2 + AH2 = A + 2 H2O. The catalysed reaction is 2 H2O2 = O2 + 2 H2O. In terms of biological role, bifunctional enzyme with both catalase and broad-spectrum peroxidase activity. The protein is Catalase-peroxidase of Rhodopirellula baltica (strain DSM 10527 / NCIMB 13988 / SH1).